Here is a 135-residue protein sequence, read N- to C-terminus: MARTKQTARKSTGGKAPRKQLATKAARKTPATGGVKKPHRYRPGTVALREIRKYQKSTELLIRKLPFQRLVREIAQDFKTDLRFQSQAVVALQEAAEAYLVGLFEDTNLCAITAKRVTIMPKDIQLARRIRGERA.

The interval 1–40 (MARTKQTARKSTGGKAPRKQLATKAARKTPATGGVKKPHR) is disordered. Lys-5 carries the N6-methyllysine modification. Lys-10 carries the post-translational modification N6-acetyllysine; alternate. At Lys-10 the chain carries N6-methyllysine; alternate. A Phosphoserine modification is found at Ser-11. A Phosphothreonine modification is found at Thr-12. N6-acetyllysine is present on residues Lys-15, Lys-19, and Lys-24. Lys-28 is subject to N6-acetyllysine; alternate. Lys-28 is modified (N6-methyllysine; alternate). Residues Lys-36 and Lys-37 each carry the N6-methyllysine modification.

It belongs to the histone H3 family. The nucleosome is a histone octamer containing two molecules each of H2A, H2B, H3 and H4 assembled in one H3-H4 heterotetramer and two H2A-H2B heterodimers. The octamer wraps approximately 147 bp of DNA. In terms of processing, acetylation is generally linked to gene activation. Acetylated to form H3K9ac (11%), H3K14ac (17%), H3K18ac (11%), H3K23ac (16%) and H3K27ac (7%). H3K4, H3K35 and H3K36 are not acetylated. H3K4me prevents acetylation. 32% of the histone H3 are acetylated with, on average, 2.4 acetyl-Lys. They are all continuously deacatylated and re-acetylated with a half-life of approximately 2 minutes. Monomethylated to form H3K4me1 (81%), H3K9me1 (16%), H3K27me1 (25%), H3K35me1 (25%) and H3K36me1 (5%). No methylation at H3K14, H3K18 and H3K23. Methylated by a protein complex that includes Mut11. Set1 methylates specifically H3K4. H3K4me1 is associated with silenced euchromatin. Set3 forms H3K9me1, while H3K9me2 is undetected. H3K9me1 is specifically associated with silent, multi-copy transgenes. Post-translationally, no phosphorylation detected.

The protein resides in the nucleus. It localises to the chromosome. Core component of nucleosome. Nucleosomes wrap and compact DNA into chromatin, limiting DNA accessibility to the cellular machineries which require DNA as a template. Histones thereby play a central role in transcription regulation, DNA repair, DNA replication and chromosomal stability. DNA accessibility is regulated via a complex set of post-translational modifications of histones, also called histone code, and nucleosome remodeling. The sequence is that of Histone H3 type 3 (ch3-IV) from Chlamydomonas reinhardtii (Chlamydomonas smithii).